Consider the following 652-residue polypeptide: Pesticidal crystal protein Cry3Bb (652 aa).

Positions 1-12 (MNPNNRSEHDTI) are enriched in basic and acidic residues. Disordered regions lie at residues 1-33 (MNPNNRSEHDTIKVTPNSELQTNHNQYPLADNP) and 433-465 (KNETSTQTYDSKRNNGHVSAQDSIDQLPPETTD). Residues 14–33 (VTPNSELQTNHNQYPLADNP) show a composition bias toward polar residues.

This sequence belongs to the delta endotoxin family. Monomer.

Promotes colloidosmotic lysis by binding to the midgut epithelial cells of Coleoptera. Has moderate level of toxicity to southern corn rootworm. The sequence is that of Pesticidal crystal protein Cry3Bb (cry3Bb) from Bacillus thuringiensis.